The chain runs to 124 residues: Probable glycine cleavage system H protein (124 aa).

The region spanning 22-104 is the Lipoyl-binding domain; that stretch reads TGRVGISEFA…FGDGWLVEID (83 aa). The residue at position 63 (Lys63) is an N6-lipoyllysine.

This sequence belongs to the GcvH family. The glycine cleavage system is composed of four proteins: P, T, L and H. Requires (R)-lipoate as cofactor.

Its function is as follows. The glycine cleavage system catalyzes the degradation of glycine. The H protein shuttles the methylamine group of glycine from the P protein to the T protein. This chain is Probable glycine cleavage system H protein, found in Halobacterium salinarum (strain ATCC 700922 / JCM 11081 / NRC-1) (Halobacterium halobium).